Reading from the N-terminus, the 209-residue chain is Peptidyl-tRNA hydrolase (209 aa).

Tyrosine 14 serves as a coordination point for tRNA. Histidine 19 acts as the Proton acceptor in catalysis. Residues tyrosine 68, asparagine 70, and asparagine 116 each coordinate tRNA.

It belongs to the PTH family. As to quaternary structure, monomer.

Its subcellular location is the cytoplasm. The catalysed reaction is an N-acyl-L-alpha-aminoacyl-tRNA + H2O = an N-acyl-L-amino acid + a tRNA + H(+). Its function is as follows. Hydrolyzes ribosome-free peptidyl-tRNAs (with 1 or more amino acids incorporated), which drop off the ribosome during protein synthesis, or as a result of ribosome stalling. Functionally, catalyzes the release of premature peptidyl moieties from peptidyl-tRNA molecules trapped in stalled 50S ribosomal subunits, and thus maintains levels of free tRNAs and 50S ribosomes. In Phenylobacterium zucineum (strain HLK1), this protein is Peptidyl-tRNA hydrolase.